A 306-amino-acid chain; its full sequence is Curved DNA-binding protein (306 aa).

A J domain is found at 5–69 (DYYAIMGVKP…QRRAEYDQMW (65 aa)).

The protein localises to the cytoplasm. Its subcellular location is the nucleoid. Its function is as follows. DNA-binding protein that preferentially recognizes a curved DNA sequence. It is probably a functional analog of DnaJ; displays overlapping activities with DnaJ, but functions under different conditions, probably acting as a molecular chaperone in an adaptive response to environmental stresses other than heat shock. Lacks autonomous chaperone activity; binds native substrates and targets them for recognition by DnaK. Its activity is inhibited by the binding of CbpM. The protein is Curved DNA-binding protein of Shigella boydii serotype 18 (strain CDC 3083-94 / BS512).